The primary structure comprises 128 residues: Con-Ins F2c (128 aa).

An N-terminal signal peptide occupies residues 1 to 24 (MTTSSYFLLVALGLLLYVCRSSFG). 4 cysteine pairs are disulfide-bonded: Cys29-Cys104, Cys41-Cys107, Cys53-Cys120, and Cys106-Cys111. Residues 59–89 (LQGGTGKKRGRASLLRKRRAFLSMLKARAKR) constitute a propeptide, c peptide. 4-carboxyglutamate; partial is present on Glu115. A Serine amide modification is found at Ser127.

The protein belongs to the insulin family. In terms of assembly, heterodimer of A and B chains; disulfide-linked. As to expression, expressed by the venom gland.

The protein resides in the secreted. Its function is as follows. This venom insulin facilitates prey capture by rapidly inducing hypoglycemic shock. Intraperitoneal injection of this peptide into zebrafish lowers blood glucose with the same potency than human insulin. In vivo, when applied to water, this peptide reduces overall locomotor activity of zebrafish larvae, observed as a significant decrease in the percentage of time spent swimming and movement frequency. This is Con-Ins F2c from Conus floridulus (Cone snail).